We begin with the raw amino-acid sequence, 584 residues long: uncharacterized protein (584 aa).

Disordered stretches follow at residues 151 to 188 (EHPP…DNDL), 222 to 243 (KRKE…SRAN), 399 to 418 (SETP…PPDF), and 433 to 584 (MQPS…AKSD). Residues 159 to 188 (TSSEKTRSENRERKKRWREQNEERNKDNDL) show a composition bias toward basic and acidic residues. A compositionally biased stretch (low complexity) spans 231-243 (LSQNQSSNASRAN). Composition is skewed to polar residues over residues 399-409 (SETPTPVSGNG), 433-453 (MQPS…SSEM), 483-500 (NAVT…SGSP), 511-531 (NYSQ…SSLP), and 572-584 (QRSS…AKSD).

This is an uncharacterized protein from Schizosaccharomyces pombe (strain 972 / ATCC 24843) (Fission yeast).